The sequence spans 476 residues: MAPAGMSLRATILCLLAWAGLAAGDRVYIHPFHLVIHNESTCEQLAKANAGKPKDPTFIPAPIQAKTSPVDEKALQDQLVLVAAKLDTEDKLRAAMVGMLANFLGFRIYGMHSELWGVVHGATVLSPTAVFGTLASLYLGALDHTADRLQAILGVPWKDKNCTSRLDAHKVLSALQAVQGLLVAQGRADSQAQLLLSTVVGVFTAPSLHLKQPFVQGLALYTPVVLPRSLDFTELDVAAEKIDRFMQAVTGWKTGCSLTGASVDSTLAFNTYVHFQGKMKGFSLLAEPQEFWVDNSTSVSVPMLSGMGTFQHWSDIQDNFSVTQVPFTESACLLLIQPHYASDLDKVEGLTFQQNSLNWMKKLSPRTIHLTMPQLVLQGSYDLQDLLAQAELPAILHTELNLQKLSNDRIRVGEVLNSIFFELEADEREPTESTQQLNKPEVLEVTLNRPFLFAVYDQSATALHFLGRVANPLSTA.

The first 24 residues, 1–24 (MAPAGMSLRATILCLLAWAGLAAG), serve as a signal peptide directing secretion. N-linked (GlcNAc...) asparagine glycosylation is found at Asn-38, Asn-161, Asn-295, and Asn-319. The cysteines at positions 42 and 162 are disulfide-linked.

Belongs to the serpin family. In terms of processing, in response to low blood pressure, the enzyme renin/REN cleaves angiotensinogen to produce angiotensin-1. Angiotensin-1 is a substrate of ACE (angiotensin converting enzyme) that removes a dipeptide to yield the physiologically active peptide angiotensin-2. Angiotensin-1 and angiotensin-2 can be further processed to generate angiotensin-3, angiotensin-4. Angiotensin 1-9 is cleaved from angiotensin-1 by ACE2 and can be further processed by ACE to produce angiotensin 1-7, angiotensin 1-5 and angiotensin 1-4. Angiotensin 1-7 has also been proposed to be cleaved from angiotensin-2 by ACE2 or from angiotensin-1 by MME (neprilysin). Post-translationally, the disulfide bond is labile. Angiotensinogen is present in the circulation in a near 40:60 ratio with the oxidized disulfide-bonded form, which preferentially interacts with receptor-bound renin.

The protein localises to the secreted. Functionally, essential component of the renin-angiotensin system (RAS), a potent regulator of blood pressure, body fluid and electrolyte homeostasis. Its function is as follows. Acts directly on vascular smooth muscle as a potent vasoconstrictor, affects cardiac contractility and heart rate through its action on the sympathetic nervous system, and alters renal sodium and water absorption through its ability to stimulate the zona glomerulosa cells of the adrenal cortex to synthesize and secrete aldosterone. Acts by binding to angiotensin receptors AGTR1 and AGTR2. Also binds the DEAR/FBXW7-AS1 receptor. In terms of biological role, stimulates aldosterone release. Is a ligand for the G-protein coupled receptor MAS1. Has vasodilator and antidiuretic effects. Has an antithrombotic effect that involves MAS1-mediated release of nitric oxide from platelets. The protein is Angiotensinogen (AGT) of Gorilla gorilla gorilla (Western lowland gorilla).